Consider the following 566-residue polypeptide: Membrane protein insertase YidC (566 aa).

Residues Asn6–Glu26 form a helical membrane-spanning segment. Residues Gln30 to Ser80 form a disordered region. Polar residues predominate over residues Val31–Asp41. The segment covering Ser42–Ser58 has biased composition (low complexity). Residues Val61 to Ser80 are compositionally biased toward polar residues. 4 consecutive transmembrane segments (helical) span residues Leu356 to Phe376, Leu433 to Leu453, Leu471 to Ile491, and Phe510 to Trp530.

Belongs to the OXA1/ALB3/YidC family. Type 1 subfamily. As to quaternary structure, interacts with the Sec translocase complex via SecD. Specifically interacts with transmembrane segments of nascent integral membrane proteins during membrane integration.

The protein localises to the cell inner membrane. In terms of biological role, required for the insertion and/or proper folding and/or complex formation of integral membrane proteins into the membrane. Involved in integration of membrane proteins that insert both dependently and independently of the Sec translocase complex, as well as at least some lipoproteins. Aids folding of multispanning membrane proteins. The protein is Membrane protein insertase YidC of Psychromonas ingrahamii (strain DSM 17664 / CCUG 51855 / 37).